Reading from the N-terminus, the 361-residue chain is Hydroxymethylglutaryl-CoA synthase (361 aa).

Residue glutamate 92 is the Proton donor/acceptor of the active site. Cysteine 124 functions as the Acyl-thioester intermediate in the catalytic mechanism. Residues cysteine 124, serine 165, threonine 214, and histidine 247 each coordinate (3S)-3-hydroxy-3-methylglutaryl-CoA. The active-site Proton donor/acceptor is histidine 247. Lysine 252 provides a ligand contact to CoA. Positions 256, 279, and 309 each coordinate (3S)-3-hydroxy-3-methylglutaryl-CoA.

This sequence belongs to the thiolase-like superfamily. Archaeal HMG-CoA synthase family. As to quaternary structure, interacts with acetoacetyl-CoA thiolase that catalyzes the precedent step in the pathway and with a DUF35 protein. The acetoacetyl-CoA thiolase/HMG-CoA synthase complex channels the intermediate via a fused CoA-binding site, which allows for efficient coupling of the endergonic thiolase reaction with the exergonic HMGCS reaction.

It carries out the reaction acetoacetyl-CoA + acetyl-CoA + H2O = (3S)-3-hydroxy-3-methylglutaryl-CoA + CoA + H(+). Its pathway is metabolic intermediate biosynthesis; (R)-mevalonate biosynthesis; (R)-mevalonate from acetyl-CoA: step 2/3. Its function is as follows. Catalyzes the condensation of acetyl-CoA with acetoacetyl-CoA to form 3-hydroxy-3-methylglutaryl-CoA (HMG-CoA). Functions in the mevalonate (MVA) pathway leading to isopentenyl diphosphate (IPP), a key precursor for the biosynthesis of isoprenoid compounds that are building blocks of archaeal membrane lipids. The polypeptide is Hydroxymethylglutaryl-CoA synthase (Aeropyrum pernix (strain ATCC 700893 / DSM 11879 / JCM 9820 / NBRC 100138 / K1)).